A 256-amino-acid polypeptide reads, in one-letter code: Hemin import ATP-binding protein HmuV (256 aa).

An ABC transporter domain is found at 2–238 (ISAQNLVYSL…QELTMLYGAD (237 aa)). 34-41 (GPNGAGKS) is an ATP binding site.

This sequence belongs to the ABC transporter superfamily. Heme (hemin) importer (TC 3.A.1.14.5) family. In terms of assembly, the complex is composed of two ATP-binding proteins (HmuV), two transmembrane proteins (HmuU) and a solute-binding protein (HmuT).

It localises to the cell inner membrane. Its function is as follows. Part of the ABC transporter complex HmuTUV involved in hemin import. Responsible for energy coupling to the transport system. The chain is Hemin import ATP-binding protein HmuV from Shigella dysenteriae.